The following is a 173-amino-acid chain: Alpha-crystallin A chain (173 aa).

Position 1 is an N-acetylmethionine (M1). The tract at residues 1–63 is required for complex formation with BFSP1 and BFSP2; that stretch reads MDVTIQHPWF…RTVLDSGISE (63 aa). The residue at position 6 (Q6) is a Deamidated glutamine; partial. S45 carries the phosphoserine modification. Q50 carries the deamidated glutamine; partial modification. Residues 52 to 162 form the sHSP domain; the sequence is LFRTVLDSGI…GPSERAIPVS (111 aa). Residues K70 and K99 each carry the N6-acetyllysine modification. Residues H100, E102, and H107 each contribute to the Zn(2+) site. Residues 145–173 are disordered; the sequence is KVASGLDAGPSERAIPVSREEKPSSAPSS. Residue S162 is glycosylated (O-linked (GlcNAc) serine).

Belongs to the small heat shock protein (HSP20) family. Heteromer composed of three CRYAA and one CRYAB subunits. Zinc coordination is achieved at least by His-100, Glu-102 and His-107. His-100 and Glu-102 come from the same molecule within the oligomer, while His-107 residue is provided by another molecule. Inter-subunit bridging via zinc ions enhances stability, which is crucial as there is no protein turn over in the lens. Can also form homodimers and homotetramers (dimers of dimers) which serve as the building blocks of homooligomers. Part of a complex required for lens intermediate filament formation composed of BFSP1, BFSP2 and CRYAA. Post-translationally, acetylation at Lys-70 may increase chaperone activity. Undergoes age-dependent proteolytical cleavage at the C-terminus.

It localises to the cytoplasm. The protein resides in the nucleus. In terms of biological role, contributes to the transparency and refractive index of the lens. Acts as a chaperone, preventing aggregation of various proteins under a wide range of stress conditions. Required for the correct formation of lens intermediate filaments as part of a complex composed of BFSP1, BFSP2 and CRYAA. The polypeptide is Alpha-crystallin A chain (CRYAA) (Erinaceus europaeus (Western European hedgehog)).